Reading from the N-terminus, the 279-residue chain is Elongation factor Ts (279 aa).

The tract at residues 80–83 (TDFV) is involved in Mg(2+) ion dislocation from EF-Tu.

This sequence belongs to the EF-Ts family.

The protein resides in the cytoplasm. In terms of biological role, associates with the EF-Tu.GDP complex and induces the exchange of GDP to GTP. It remains bound to the aminoacyl-tRNA.EF-Tu.GTP complex up to the GTP hydrolysis stage on the ribosome. The chain is Elongation factor Ts from Borrelia garinii subsp. bavariensis (strain ATCC BAA-2496 / DSM 23469 / PBi) (Borreliella bavariensis).